Here is a 246-residue protein sequence, read N- to C-terminus: Probable transcriptional regulatory protein HS_0508 (246 aa).

The protein belongs to the TACO1 family.

Its subcellular location is the cytoplasm. The sequence is that of Probable transcriptional regulatory protein HS_0508 from Histophilus somni (strain 129Pt) (Haemophilus somnus).